The chain runs to 441 residues: Ribulose bisphosphate carboxylase large chain (441 aa).

Substrate is bound by residues asparagine 89 and threonine 139. Lysine 141 acts as the Proton acceptor in catalysis. Position 143 (lysine 143) interacts with substrate. Residues lysine 167, aspartate 169, and glutamate 170 each contribute to the Mg(2+) site. N6-carboxylysine is present on lysine 167. Residue histidine 260 is the Proton acceptor of the active site. The substrate site is built by residue 261, histidine 293, and serine 345.

The protein belongs to the RuBisCO large chain family. Type I subfamily. Heterohexadecamer of 8 large chains and 8 small chains; disulfide-linked. The disulfide link is formed within the large subunit homodimers. It depends on Mg(2+) as a cofactor. In terms of processing, the disulfide bond which can form in the large chain dimeric partners within the hexadecamer appears to be associated with oxidative stress and protein turnover.

It localises to the plastid. It is found in the chloroplast. The enzyme catalyses 2 (2R)-3-phosphoglycerate + 2 H(+) = D-ribulose 1,5-bisphosphate + CO2 + H2O. It catalyses the reaction D-ribulose 1,5-bisphosphate + O2 = 2-phosphoglycolate + (2R)-3-phosphoglycerate + 2 H(+). In terms of biological role, ruBisCO catalyzes two reactions: the carboxylation of D-ribulose 1,5-bisphosphate, the primary event in carbon dioxide fixation, as well as the oxidative fragmentation of the pentose substrate in the photorespiration process. Both reactions occur simultaneously and in competition at the same active site. The protein is Ribulose bisphosphate carboxylase large chain of Apocynum cannabinum (Hemp dogbane).